Reading from the N-terminus, the 84-residue chain is MSTNSESNARTMIGKVVSDKMDKTIVVMIERTVKHPKYGKIMKRRTKLHAHDENQVCRVGNTVKIRESRPLSKTKSWVLVEVIS.

Belongs to the universal ribosomal protein uS17 family. Part of the 30S ribosomal subunit.

Functionally, one of the primary rRNA binding proteins, it binds specifically to the 5'-end of 16S ribosomal RNA. The protein is Small ribosomal subunit protein uS17 of Legionella pneumophila (strain Paris).